A 132-amino-acid chain; its full sequence is Putative F-box protein At4g05620 (132 aa).

The F-box domain occupies 17 to 63; it reads QKKSLSLPHDVLVSCLAHVSRLHYSILSLVLKNFRSLIASPELYKTR.

This chain is Putative F-box protein At4g05620, found in Arabidopsis thaliana (Mouse-ear cress).